Reading from the N-terminus, the 1496-residue chain is DNA-directed RNA polymerase subunit beta' (1496 aa).

Residues Cys-70, Cys-72, Cys-85, and Cys-88 each contribute to the Zn(2+) site. 3 residues coordinate Mg(2+): Asp-461, Asp-463, and Asp-465. Zn(2+) contacts are provided by Cys-908, Cys-982, Cys-989, and Cys-992. Positions 1467 to 1496 (DKDMQVEGESEVPAIPPVAEGSAPEAPPAE) are disordered.

It belongs to the RNA polymerase beta' chain family. In terms of assembly, the RNAP catalytic core consists of 2 alpha, 1 beta, 1 beta' and 1 omega subunit. When a sigma factor is associated with the core the holoenzyme is formed, which can initiate transcription. It depends on Mg(2+) as a cofactor. The cofactor is Zn(2+).

It catalyses the reaction RNA(n) + a ribonucleoside 5'-triphosphate = RNA(n+1) + diphosphate. Functionally, DNA-dependent RNA polymerase catalyzes the transcription of DNA into RNA using the four ribonucleoside triphosphates as substrates. This is DNA-directed RNA polymerase subunit beta' from Paramagnetospirillum magneticum (strain ATCC 700264 / AMB-1) (Magnetospirillum magneticum).